The primary structure comprises 600 residues: Elongation factor 4 (600 aa).

Residues 5-187 form the tr-type G domain; the sequence is KYIRNFSIIA…AIVNKLPPPK (183 aa). GTP is bound by residues 17 to 22 and 134 to 137; these read DHGKST and NKLD.

The protein belongs to the TRAFAC class translation factor GTPase superfamily. Classic translation factor GTPase family. LepA subfamily.

It is found in the cell inner membrane. It catalyses the reaction GTP + H2O = GDP + phosphate + H(+). Required for accurate and efficient protein synthesis under certain stress conditions. May act as a fidelity factor of the translation reaction, by catalyzing a one-codon backward translocation of tRNAs on improperly translocated ribosomes. Back-translocation proceeds from a post-translocation (POST) complex to a pre-translocation (PRE) complex, thus giving elongation factor G a second chance to translocate the tRNAs correctly. Binds to ribosomes in a GTP-dependent manner. This is Elongation factor 4 from Rickettsia africae (strain ESF-5).